The chain runs to 228 residues: Cytidylate kinase (228 aa).

Residue 17 to 25 (GPTASGKGT) coordinates ATP.

It belongs to the cytidylate kinase family. Type 1 subfamily.

Its subcellular location is the cytoplasm. It carries out the reaction CMP + ATP = CDP + ADP. It catalyses the reaction dCMP + ATP = dCDP + ADP. The protein is Cytidylate kinase of Burkholderia ambifaria (strain ATCC BAA-244 / DSM 16087 / CCUG 44356 / LMG 19182 / AMMD) (Burkholderia cepacia (strain AMMD)).